We begin with the raw amino-acid sequence, 196 residues long: Heat shock protein beta-8 (196 aa).

The disordered stretch occupies residues 1–28 (MADGQLPFPCSYPSRLRRDPFRDSPLSS). Residues S24 and S57 each carry the phosphoserine modification. T63 carries the phosphothreonine modification. Residues R71 and R78 each carry the asymmetric dimethylarginine modification. In terms of domain architecture, sHSP spans 78–185 (RFGVPAEGRS…PFGESSFNNE (108 aa)). S87 is modified (phosphoserine). The tract at residues 176 to 196 (PFGESSFNNELPQDNQEVTCS) is disordered. A compositionally biased stretch (polar residues) spans 178-196 (GESSFNNELPQDNQEVTCS).

It belongs to the small heat shock protein (HSP20) family. As to quaternary structure, monomer. Forms a ternary complex with BAG3 and HSPA1A. Component of the chaperone-assisted selective autophagy (CASA) complex consisting of BAG3, HSPA8/HSC70, HSPB8 and STUB1/CHIP. Interacts with HSPB1. Interacts with DNAJB6. Interacts with BAG3. As to expression, highly expressed in skeletal muscle, heart, uterus, liver, lung and ovary. Low levels found in stomach and brain. Not detected in small intestine, large intestine, kidney, spleen and testis. In the ovary, expression is concentrated in the endometrium and in the connective tissue between the circular and longitudinal muscles of the myometrium.

It localises to the cytoplasm. Its subcellular location is the nucleus. Involved in the chaperone-assisted selective autophagy (CASA), a crucial process for protein quality control, particularly in mechanical strained cells and tissues such as muscle. Displays temperature-dependent chaperone activity. The sequence is that of Heat shock protein beta-8 (Hspb8) from Mus musculus (Mouse).